Consider the following 259-residue polypeptide: Tonin (259 aa).

The N-terminal stretch at 1–18 (MWLQILSLVLSVGRIDAA) is a signal peptide. Positions 19 to 24 (PPGQSR) are cleaved as a propeptide — activation peptide. Positions 25–256 (IVGGYKCEKN…FTSWIKKVMK (232 aa)) constitute a Peptidase S1 domain. Disulfide bonds link cysteine 31–cysteine 171, cysteine 48–cysteine 64, cysteine 150–cysteine 217, cysteine 182–cysteine 196, and cysteine 207–cysteine 232. Histidine 63 serves as the catalytic Charge relay system. Zn(2+) is bound at residue histidine 63. Asparagine 106 carries N-linked (GlcNAc...) asparagine glycosylation. The Zn(2+) site is built by histidine 113 and histidine 115. Catalysis depends on aspartate 118, which acts as the Charge relay system. A glycan (N-linked (GlcNAc...) asparagine) is linked at asparagine 189. Catalysis depends on serine 211, which acts as the Charge relay system.

It belongs to the peptidase S1 family. Kallikrein subfamily. In terms of assembly, monomer. It depends on Zn(2+) as a cofactor. As to expression, found in submaxillary gland.

The enzyme catalyses Preferential cleavage of Arg-|-Xaa bonds in small molecule substrates. Highly selective action to release kallidin (lysyl-bradykinin) from kininogen involves hydrolysis of Met-|-Xaa or Leu-|-Xaa.. Functionally, this protein has both trypsin- and chymotrypsin-like activities, being able to release angiotensin II from angiotensin I or angiotensinogen. This Rattus norvegicus (Rat) protein is Tonin (Klk2).